The primary structure comprises 487 residues: Glutamyl-tRNA(Gln) amidotransferase subunit A (487 aa).

Active-site charge relay system residues include Lys79 and Ser158. The Acyl-ester intermediate role is filled by Ser182.

This sequence belongs to the amidase family. GatA subfamily. As to quaternary structure, heterotrimer of A, B and C subunits.

The catalysed reaction is L-glutamyl-tRNA(Gln) + L-glutamine + ATP + H2O = L-glutaminyl-tRNA(Gln) + L-glutamate + ADP + phosphate + H(+). In terms of biological role, allows the formation of correctly charged Gln-tRNA(Gln) through the transamidation of misacylated Glu-tRNA(Gln) in organisms which lack glutaminyl-tRNA synthetase. The reaction takes place in the presence of glutamine and ATP through an activated gamma-phospho-Glu-tRNA(Gln). This Ehrlichia ruminantium (strain Gardel) protein is Glutamyl-tRNA(Gln) amidotransferase subunit A.